The sequence spans 493 residues: Glutamyl-tRNA(Gln) amidotransferase subunit A (493 aa).

Active-site charge relay system residues include lysine 79 and serine 159. Catalysis depends on serine 183, which acts as the Acyl-ester intermediate.

Belongs to the amidase family. GatA subfamily. As to quaternary structure, heterotrimer of A, B and C subunits.

The catalysed reaction is L-glutamyl-tRNA(Gln) + L-glutamine + ATP + H2O = L-glutaminyl-tRNA(Gln) + L-glutamate + ADP + phosphate + H(+). In terms of biological role, allows the formation of correctly charged Gln-tRNA(Gln) through the transamidation of misacylated Glu-tRNA(Gln) in organisms which lack glutaminyl-tRNA synthetase. The reaction takes place in the presence of glutamine and ATP through an activated gamma-phospho-Glu-tRNA(Gln). In Rhizobium leguminosarum bv. trifolii (strain WSM2304), this protein is Glutamyl-tRNA(Gln) amidotransferase subunit A.